Here is a 251-residue protein sequence, read N- to C-terminus: Developmental protein SEPALLATA 1 (251 aa).

Residues 3–57 (RGRVELKRIENKINRQVTFAKRRNGLLKKAYELSVLCDAEVALIIFSNRGKLYEF) enclose the MADS-box domain. Residues 85–176 (AKELENSYRE…ALAMKLDDMI (92 aa)) are a coiled coil. The K-box domain occupies 88–178 (LENSYREYLK…AMKLDDMIGV (91 aa)).

In terms of assembly, heterodimer with AGAMOUS capable of binding to CArG-box sequences. Interacts with AGL16. Interacts with TT16/AGL32. As to expression, expressed mainly in carpels, and weakly in stamens.

It is found in the nucleus. Its function is as follows. Probable transcription factor. Functions with SEPALLATA2/AGL4 and SEPALLATA3/AGL9 to ensure proper development of petals, stamens and carpels, and to prevent the indeterminate growth of the flower meristem. Forms a heterodimer via the K-box domain with AGAMOUS, that could be involved in genes regulation during floral meristem development. In Arabidopsis thaliana (Mouse-ear cress), this protein is Developmental protein SEPALLATA 1 (SEP1).